The sequence spans 115 residues: Large ribosomal subunit protein bL19 (115 aa).

This sequence belongs to the bacterial ribosomal protein bL19 family.

Its function is as follows. This protein is located at the 30S-50S ribosomal subunit interface and may play a role in the structure and function of the aminoacyl-tRNA binding site. This Buchnera aphidicola subsp. Acyrthosiphon pisum (strain APS) (Acyrthosiphon pisum symbiotic bacterium) protein is Large ribosomal subunit protein bL19 (rplS).